Consider the following 216-residue polypeptide: Probable chemoreceptor glutamine deamidase CheD (216 aa).

This sequence belongs to the CheD family.

The enzyme catalyses L-glutaminyl-[protein] + H2O = L-glutamyl-[protein] + NH4(+). In terms of biological role, probably deamidates glutamine residues to glutamate on methyl-accepting chemotaxis receptors (MCPs), playing an important role in chemotaxis. The sequence is that of Probable chemoreceptor glutamine deamidase CheD from Halorhodospira halophila (strain DSM 244 / SL1) (Ectothiorhodospira halophila (strain DSM 244 / SL1)).